Consider the following 1059-residue polypeptide: Disks large-associated protein 2 (1059 aa).

2 disordered regions span residues 31–54 (GEPE…PAEE) and 245–311 (KSHS…SDST). Residues 245 to 261 (KSHSLEGSSKSNINGTK) show a composition bias toward polar residues. The segment covering 262–271 (SDSRVDDHHQ) has biased composition (basic and acidic residues). The segment covering 272-285 (SHLSKHSKRSKSKE) has biased composition (basic residues). A phosphoserine mark is found at S302, S308, S390, and S456. Residues 613-669 (YKKTPPPVPPRTTSKPLISVTAQSSTESTQDAYQDSRAQRMSPWPQDSRGGLYNSMD) form a disordered region. A compositionally biased stretch (polar residues) spans 632–645 (VTAQSSTESTQDAY). S667, S670, S673, and S720 each carry phosphoserine. Residues 723-756 (VQDSEFPDHQPYPRSDVETATDSDTESRGLREYH) are disordered. T743 is subject to Phosphothreonine. S745 is subject to Phosphoserine. Basic and acidic residues predominate over residues 747-756 (TESRGLREYH). Phosphoserine occurs at positions 776, 811, 983, and 1012. The segment at 985–1025 (ERKEERKIPPPIPKKPPKGKFPITREKSLDLPDRQRQEARR) is disordered. The span at 1007-1025 (ITREKSLDLPDRQRQEARR) shows a compositional bias: basic and acidic residues.

This sequence belongs to the SAPAP family. Interacts with DLG4/PSD-95. As to expression, expressed in various brain areas.

The protein localises to the cell membrane. The protein resides in the postsynaptic density. Its subcellular location is the synapse. In terms of biological role, may play a role in the molecular organization of synapses and neuronal cell signaling. Could be an adapter protein linking ion channel to the subsynaptic cytoskeleton. May induce enrichment of PSD-95/SAP90 at the plasma membrane. This chain is Disks large-associated protein 2, found in Mus musculus (Mouse).